A 428-amino-acid polypeptide reads, in one-letter code: tRNA modification GTPase MnmE (428 aa).

(6S)-5-formyl-5,6,7,8-tetrahydrofolate contacts are provided by Arg-20, Glu-77, and Lys-117. The TrmE-type G domain maps to 213 to 351 (GFEVAIVGSP…LVSRISDTLR (139 aa)). Residues 223–228 (NVGKST), 242–248 (SEYAGTT), and 267–270 (DTAG) contribute to the GTP site. Residues Ser-227 and Thr-248 each contribute to the Mg(2+) site. (6S)-5-formyl-5,6,7,8-tetrahydrofolate is bound at residue Lys-428.

Belongs to the TRAFAC class TrmE-Era-EngA-EngB-Septin-like GTPase superfamily. TrmE GTPase family. As to quaternary structure, homodimer. Heterotetramer of two MnmE and two MnmG subunits. Requires K(+) as cofactor.

It is found in the cytoplasm. Exhibits a very high intrinsic GTPase hydrolysis rate. Involved in the addition of a carboxymethylaminomethyl (cmnm) group at the wobble position (U34) of certain tRNAs, forming tRNA-cmnm(5)s(2)U34. In Ruegeria sp. (strain TM1040) (Silicibacter sp.), this protein is tRNA modification GTPase MnmE.